The sequence spans 968 residues: Breast cancer anti-estrogen resistance protein 1 (968 aa).

At Met1 the chain carries N-acetylmethionine. Residues 97–159 (DKNVLAKALY…PGNRLKILVG (63 aa)) enclose the SH3 domain. Positions 164 to 277 (KPAAPGPGPP…GPGSPAQDIY (114 aa)) are disordered. Pro residues predominate over residues 167–182 (APGPGPPATPPQPQPS). Positions 213 to 514 (YLVPTPSKTQ…DGVYAVPPPA (302 aa)) are substrate for kinases. Position 226 is a phosphotyrosine; by SRC (Tyr226). Residues 233–249 (PQFQSPPAKQTSTFSKQ) show a composition bias toward polar residues. Position 237 is a phosphoserine (Ser237). A Phosphotyrosine modification is found at Tyr332. The residue at position 347 (Tyr347) is a Phosphotyrosine; by ABL1. The residue at position 367 (Thr367) is a Phosphothreonine. Position 390 is a phosphoserine (Ser390). A disordered region spans residues 393-416 (KGLPPSNHHSVYDVPPSVSKDVPD). Residues Tyr460, Tyr470, and Tyr508 each carry the phosphotyrosine modification. Disordered regions lie at residues 503-544 (IDDG…SLEV) and 705-756 (RTKA…NSEG). Residues 514-524 (AEREAPTDGKR) show a composition bias toward basic and acidic residues. Low complexity predominate over residues 525–542 (LSASSTGSTRSSQSASSL). A phosphoserine mark is found at Ser526, Ser535, and Ser737. A compositionally biased stretch (polar residues) spans 715–753 (GSSSLHLNPTDKASSIQSRPLPSPPKFTSQDSPDGQYEN). The SH3-binding signature appears at 733–741 (RPLPSPPKF). The divergent helix-loop-helix motif stretch occupies residues 844–894 (FYLEQCEANLTTLTDAVDAFFTAVATNQPPKIFVAHSKFVILSAHKLVFIG).

Belongs to the CAS family. Forms complexes in vivo with PTK2/FAK1, adapter protein CRKL and LYN kinase. Can heterodimerize with NEDD9. Component of a complex comprised of SH2D3C, BCAR1/CAS, and CRK. Within the complex, interacts with SH2D3C (via C-terminus), and CRK. Part of a complex comprised of PTPRA, BCAR1, BCAR3 (via SH2 domain) and SRC; the formation of the complex is dependent on integrin mediated-tyrosine phosphorylation of PTPRA. Interacts with BCAR3 (via Ras-GEF domain); the interaction regulates adhesion-dependent serine phosphorylation. Interacts with SMAD2 and SMAD3. Interacts with NPHP1. Interacts with PTK2B/PYK2. Interacts (via C-terminus) with SH2D3C/CHAT isoform 2 (via C-terminus). Interacts with activated CSPG4. Interacts with BMX, INPPL1/SHIP2 and PEAK1. Part of a collagen stimulated complex involved in cell migration composed of CDC42, CRK, TNK2 and BCAR1/p130cas. Interacts with TNK2 via SH3 domains. Interacts with PTK2B/PYK2. Interacts (when tyrosine-phosphorylated) with tensin TNS1; the interaction is increased by phosphorylation of TNS1. Post-translationally, PTK2/FAK1 activation mediates phosphorylation at the YDYVHL motif; phosphorylation is most likely catalyzed by SRC family members. SRC-family kinases are recruited to the phosphorylated sites and can phosphorylate other tyrosine residues. Tyrosine phosphorylation is triggered by integrin mediated adhesion of cells to the extracellular matrix. In terms of processing, phosphorylated by SRC kinase in a EDN1- and PTK2B-mediated manner; phosphorylation strengthens its interaction with BCAR3 as part of the PTK2B/BCAR1/BCAR3/RAP1 signaling pathway. Dephosphorylated by PTPN14 at Tyr-226. In terms of tissue distribution, widely expressed. Higher expression in lung, intestine and testis.

It localises to the cell junction. The protein resides in the focal adhesion. The protein localises to the cytoplasm. It is found in the cell projection. Its subcellular location is the axon. Functionally, docking protein which plays a central coordinating role for tyrosine-kinase-based signaling related to cell adhesion. Implicated in induction of cell migration and cell branching. Involved in the BCAR3-mediated inhibition of TGFB signaling. The polypeptide is Breast cancer anti-estrogen resistance protein 1 (Bcar1) (Rattus norvegicus (Rat)).